Consider the following 593-residue polypeptide: Cell surface glycoprotein (593 aa).

Positions 1 to 22 (MRKFTLLMLLLIVISMSGIAGA) are cleaved as a signal peptide. Residues Asn29, Asn58, Asn66, Asn74, Asn114, Asn122, Asn145, Asn148, Asn158, Asn176, Asn208, Asn231, Asn326, Asn336, Asn340, Asn431, Asn471, Asn500, and Asn516 are each glycosylated (N-linked (GalNAc...) asparagine).

Post-translationally, N-glycosylated; contains glycans composed of methyl-Man, Man and GalNAc residues in a molar ratio of 2:3:1.

The protein localises to the secreted. It is found in the cell wall. Its subcellular location is the S-layer. Its function is as follows. The S-layer is a paracrystalline mono-layered assembly of proteins which coat the surface of the cell. In Methanothermus fervidus (strain ATCC 43054 / DSM 2088 / JCM 10308 / V24 S), this protein is Cell surface glycoprotein (slgA).